Reading from the N-terminus, the 416-residue chain is Multifunctional CCA protein (416 aa).

ATP contacts are provided by Gly-8 and Arg-11. Gly-8 and Arg-11 together coordinate CTP. Mg(2+)-binding residues include Asp-21 and Asp-23. The ATP site is built by Arg-91, Arg-137, and Arg-140. Residues Arg-91, Arg-137, and Arg-140 each coordinate CTP. Residues 226–327 form the HD domain; that stretch reads TGVHIMLVID…VNLLERCDAF (102 aa).

It belongs to the tRNA nucleotidyltransferase/poly(A) polymerase family. Bacterial CCA-adding enzyme type 1 subfamily. In terms of assembly, monomer. Can also form homodimers and oligomers. Mg(2+) serves as cofactor. Ni(2+) is required as a cofactor.

The enzyme catalyses a tRNA precursor + 2 CTP + ATP = a tRNA with a 3' CCA end + 3 diphosphate. The catalysed reaction is a tRNA with a 3' CCA end + 2 CTP + ATP = a tRNA with a 3' CCACCA end + 3 diphosphate. Functionally, catalyzes the addition and repair of the essential 3'-terminal CCA sequence in tRNAs without using a nucleic acid template. Adds these three nucleotides in the order of C, C, and A to the tRNA nucleotide-73, using CTP and ATP as substrates and producing inorganic pyrophosphate. tRNA 3'-terminal CCA addition is required both for tRNA processing and repair. Also involved in tRNA surveillance by mediating tandem CCA addition to generate a CCACCA at the 3' terminus of unstable tRNAs. While stable tRNAs receive only 3'-terminal CCA, unstable tRNAs are marked with CCACCA and rapidly degraded. The sequence is that of Multifunctional CCA protein from Janthinobacterium sp. (strain Marseille) (Minibacterium massiliensis).